The following is a 271-amino-acid chain: Mannosyl-3-phosphoglycerate phosphatase (271 aa).

The Nucleophile role is filled by Asp13. 3 residues coordinate Mg(2+): Asp13, Asp15, and Asp214.

Belongs to the HAD-like hydrolase superfamily. MPGP family. Mg(2+) serves as cofactor.

Its subcellular location is the cytoplasm. It carries out the reaction 2-O-(alpha-D-mannosyl)-3-phosphoglycerate + H2O = (2R)-2-O-(alpha-D-mannosyl)-glycerate + phosphate. This chain is Mannosyl-3-phosphoglycerate phosphatase, found in Escherichia coli O17:K52:H18 (strain UMN026 / ExPEC).